The following is an 82-amino-acid chain: Small ribosomal subunit protein bS18 (82 aa).

Over residues 1–10 (MTDTNQNSSR) the composition is skewed to polar residues. A disordered region spans residues 1–21 (MTDTNQNSSRRPFHRRRKTCP).

The protein belongs to the bacterial ribosomal protein bS18 family. In terms of assembly, part of the 30S ribosomal subunit. Forms a tight heterodimer with protein bS6.

Functionally, binds as a heterodimer with protein bS6 to the central domain of the 16S rRNA, where it helps stabilize the platform of the 30S subunit. The polypeptide is Small ribosomal subunit protein bS18 (Bartonella tribocorum (strain CIP 105476 / IBS 506)).